The sequence spans 381 residues: Chymosin (381 aa).

A signal peptide spans 1-16 (MRCLVVLLAVFALSQG). A propeptide spans 17-58 (AEITRIPLYKGKPLRKALKERGLLEDFLQKQQYGVSSEYSGF) (activation peptide). The region spanning 74–378 (YFGKIYLGTP…DRANNLVGLA (305 aa)) is the Peptidase A1 domain. D92 is an active-site residue. 2 cysteine pairs are disulfide-bonded: C105-C110 and C265-C269. The active site involves D274. An intrachain disulfide couples C308 to C341.

The protein belongs to the peptidase A1 family. As to quaternary structure, monomer.

The catalysed reaction is Broad specificity similar to that of pepsin A. Clots milk by cleavage of a single 104-Ser-Phe-|-Met-Ala-107 bond in kappa-chain of casein.. Functionally, chymosin is synthesized in the mucosa of the stomach. The enzyme hydrolyzes casein to paracasein. This Ovis aries (Sheep) protein is Chymosin (CYM).